The chain runs to 237 residues: Proteasome subunit beta type-1 (237 aa).

The protein belongs to the peptidase T1B family. In terms of assembly, the 26S proteasome consists of a 20S proteasome core and two 19S regulatory subunits. The 20S proteasome core is a barrel-shaped complex made of 28 subunits that are arranged in four stacked rings. The two outer rings are each formed by seven alpha subunits, and the two inner rings are formed by seven beta subunits. The proteolytic activity is exerted by three beta-subunits psmb5, psmb6 and psmb7.

It localises to the cytoplasm. Its subcellular location is the nucleus. Non-catalytic component of the 20S core proteasome complex involved in the proteolytic degradation of most intracellular proteins. This complex plays numerous essential roles within the cell by associating with different regulatory particles. Associated with two 19S regulatory particles, forms the 26S proteasome and thus participates in the ATP-dependent degradation of ubiquitinated proteins. The 26S proteasome plays a key role in the maintenance of protein homeostasis by removing misfolded or damaged proteins that could impair cellular functions, and by removing proteins whose functions are no longer required. Associated with the PA200 or PA28, the 20S proteasome mediates ubiquitin-independent protein degradation. In Danio rerio (Zebrafish), this protein is Proteasome subunit beta type-1.